We begin with the raw amino-acid sequence, 187 residues long: Sodium/potassium ATPase inhibitor SPAI-2 (187 aa).

Positions 1 to 21 (MRSRSFLVLVAVFLICETLVA) are cleaved as a signal peptide. Residue glutamine 22 is modified to Pyrrolidone carboxylic acid. Positions 22-126 (QRLDRIRGPK…NAQLPDKVQD (105 aa)) are excised as a propeptide. The segment at 28–98 (RGPKGQGQDP…QDPVKAELPD (71 aa)) is disordered. Repeat copies occupy residues 34–39 (GQDPVE), 40–45 (GQDQDE), 46–51 (GPGPVK), 58–63 (GQDPVK), 64–69 (GQDPVK), 70–75 (GQDPVK), 76–81 (GQDPVK), 82–87 (GQDLVK), 88–93 (SQDPVK), 100–105 (GQDVVK), 106–111 (GHEPVE), 112–117 (GQDPVN), 118–123 (AQLPDK), and 124–129 (VQDPVK). The segment at 34–129 (GQDPVEGQDQ…LPDKVQDPVK (96 aa)) is 14 X 6 AA approximate tandem repeats. The stretch at 64-85 (GQDPVKGQDPVKGQDPVKGQDL) is one SVP-1 clotting 1 repeat. Residues 139 to 187 (LLSKRGHCPRILFRCPLSNPSNKCWRDYDCPGVKKCCEGFCGKDCLYPK) enclose the WAP domain. Disulfide bonds link cysteine 146-cysteine 175, cysteine 153-cysteine 179, cysteine 162-cysteine 174, and cysteine 168-cysteine 183.

The short form (AA 127-187) may be an artifact due to the strongly acidic conditions of the duodenum. The pro-SPAI form may be the native form. As to expression, small intestine &gt; large intestine. The plasma contains the pro-SPAI form circulating.

Inhibits Na(+),K(+) ATPase by the competitive mode against Na(+). The sequence is that of Sodium/potassium ATPase inhibitor SPAI-2 from Sus scrofa (Pig).